A 222-amino-acid polypeptide reads, in one-letter code: Eukaryotic translation initiation factor 4E-1 (222 aa).

Residues 1–22 are compositionally biased toward basic and acidic residues; sequence MVDEVEKPASLEESKTNTREVE. The tract at residues 1-37 is disordered; that stretch reads MVDEVEKPASLEESKTNTREVEEGAEEVIESDDTMSS. Residues 23-33 are compositionally biased toward acidic residues; that stretch reads EGAEEVIESDD. 2 EIF4G-binding regions span residues 47–50 and 57–93; these read HPLE and FDNPSGKSKQAAWGSSIRPIYTFSTVEDFWSVYNNIH. MRNA contacts are provided by residues 65-70, Lys97, and 115-116; these read KQAAWG and WE. Residues Cys120 and Cys158 are joined by a disulfide bond. The EIF4G-binding stretch occupies residues 141–150; the sequence is YTLLAMIGEQ. Residues 165 to 170 and 210 to 214 contribute to the mRNA site; these read RVRQEK and KKLDR.

This sequence belongs to the eukaryotic initiation factor 4E family. In terms of assembly, EIF4F is a multi-subunit complex, the composition of which varies with external and internal environmental conditions. It is composed of at least EIF4A, EIF4E and EIF4G. EIF4E is also known to interact with other partners. In higher plants two isoforms of EIF4F have been identified, named isoform EIF4F and isoform EIF(iso)4F. Isoform EIF4F has subunits p220 and p26, whereas isoform EIF(iso)4F has subunits p82 and p28. Post-translationally, according to the redox status, the Cys-120-Cys-158 disulfide bridge may have a role in regulating protein function by affecting its ability to bind capped mRNA. In terms of tissue distribution, expressed ubiquitously in seedlings, roots, leaves, sepals, petals, anthers and dehisced pollen, with highest levels in pollen, maturing anthers and roots. Strongly expressed in susceptible plants but not in resistant ones.

The protein resides in the nucleus. The protein localises to the cytoplasm. In terms of biological role, component of the protein complex eIF4F, which is involved in the recognition of the mRNA cap, ATP-dependent unwinding of 5'-terminal secondary structure and recruitment of mRNA to the ribosome. Recognizes and binds the 7-methylguanosine-containing mRNA cap during an early step in the initiation of protein synthesis and facilitates ribosome binding by inducing the unwinding of the mRNAs secondary structures. Key component of recessive resistance to potyviruses. Functionally, (Microbial infection) Susceptibility host factor required for viral infection (e.g. potato virus Y (PVY) and pepper mottle virus (PepMoV)) by recruiting viral RNAs to the host ribosomal complex via an interaction with viral genome-linked protein (VPg). In Nicotiana tabacum (Common tobacco), this protein is Eukaryotic translation initiation factor 4E-1.